The sequence spans 557 residues: Putative glutathione-regulated potassium-efflux system protein KefB (557 aa).

A run of 10 helical transmembrane segments spans residues 2-22 (LGYL…ISDV), 24-44 (EILH…GLEL), 56-76 (IFGV…GLLM), 84-104 (AAVV…LQLM), 121-141 (VLLF…LLAG), 146-166 (HFDW…LIGG), 176-196 (FIAA…LVLG), 199-219 (LFMD…GVLL), 237-257 (GLLL…GVLY), and 260-280 (LLWV…VLYL). The RCK N-terminal domain occupies 356-475 (KPQVIVVGFG…AGVTQFSRET (120 aa)).

This sequence belongs to the monovalent cation:proton antiporter 2 (CPA2) transporter (TC 2.A.37) family. KefB subfamily. Interacts with the regulatory subunit KefG.

It localises to the cell inner membrane. Functionally, pore-forming subunit of a potassium efflux system that confers protection against electrophiles. Catalyzes K(+)/H(+) antiport. In Shigella flexneri, this protein is Putative glutathione-regulated potassium-efflux system protein KefB.